The chain runs to 492 residues: Solute carrier family 2, facilitated glucose transporter member 1 (492 aa).

Residue Met1 is modified to N-acetylmethionine. Residues 1 to 11 lie on the Cytoplasmic side of the membrane; it reads MEPTSKKLTGR. The helical transmembrane segment at 12 to 33 threads the bilayer; sequence LMLAVGGAVLGSLQFGYNTGVI. Residues 34–66 are Extracellular-facing; that stretch reads NAPQKVIEEFYNQTWVQRYGEPIPPATLTTLWS. Residue Asn45 is glycosylated (N-linked (GlcNAc...) asparagine). The helical transmembrane segment at 67–87 threads the bilayer; sequence LSVAIFSVGGMIGSFSVGLFV. Over 88-90 the chain is Cytoplasmic; that stretch reads NRF. Residues 91–112 form a helical membrane-spanning segment; that stretch reads GRRNSMLMMNLLAFVSAVLMGF. Over 113-120 the chain is Extracellular; sequence SKLGKSFE. Residues 121–144 form a helical membrane-spanning segment; that stretch reads MLILGRFIIGVYCGLTTGFVPMYV. Residues 145–155 lie on the Cytoplasmic side of the membrane; the sequence is GEVSPTELRGA. A helical membrane pass occupies residues 156 to 176; the sequence is LGTLHQLGIVVGILIAQVFGL. Gln161 provides a ligand contact to D-glucose. The Extracellular segment spans residues 177 to 185; the sequence is DSIMGNQEL. A helical transmembrane segment spans residues 186–206; sequence WPLLLSVIFIPALLQCILLPF. The Cytoplasmic portion of the chain corresponds to 207-271; that stretch reads CPESPRFLLI…LFRSAAYRQP (65 aa). Ser226 carries the post-translational modification Phosphoserine. Residues 272-293 traverse the membrane as a helical segment; it reads ILIAVVLQLSQQLSGINAVFYY. D-glucose is bound by residues 282 to 283 and Asn288; that span reads QQ. Residues 294–306 lie on the Extracellular side of the membrane; the sequence is STSIFEKAGVQQP. A helical transmembrane segment spans residues 307–328; sequence VYATIGSGIVNTAFTVVSLFVV. Asn317 contacts D-glucose. The Cytoplasmic portion of the chain corresponds to 329-334; it reads ERAGRR. A helical transmembrane segment spans residues 335–355; the sequence is TLHLIGLAGMAGCAVLMTIAL. The Extracellular portion of the chain corresponds to 356 to 365; that stretch reads ALLERLPWMS. The chain crosses the membrane as a helical span at residues 366-388; the sequence is YLSIVAIFGFVAFFEVGPGPIPW. The D-glucose site is built by Glu380 and Trp388. Topologically, residues 389–401 are cytoplasmic; it reads FIVAELFSQGPRP. A helical membrane pass occupies residues 402-422; it reads AAIAVAGFSNWTSNFIVGMCF. Residues 423 to 429 are Extracellular-facing; that stretch reads QYVEQLC. A helical transmembrane segment spans residues 430 to 450; sequence GPYVFIIFTVLLVLFFIFTYF. Residues 451–492 are Cytoplasmic-facing; sequence KVPETKGRTFDEIASGFRQGGASQSDKTPEELFHPLGADSQV. At Ser465 the chain carries Phosphoserine. Residues 468 to 492 form a disordered region; sequence RQGGASQSDKTPEELFHPLGADSQV. Position 478 is a phosphothreonine (Thr478). Ser490 is modified (phosphoserine).

The protein belongs to the major facilitator superfamily. Sugar transporter (TC 2.A.1.1) family. Glucose transporter subfamily. In terms of assembly, found in a complex with ADD2, DMTN and SLC2A1. Interacts (via C-terminus cytoplasmic region) with DMTN. Interacts with SNX27; the interaction is required when endocytosed to prevent degradation in lysosomes and promote recycling to the plasma membrane. Interacts with GIPC (via PDZ domain). Interacts with STOM. Interacts with SGTA (via Gln-rich region). Interacts with BSG. Interacts with SMIM43; the interaction may promote SLC2A1-mediated glucose transport to meet the energy needs of mesendoderm differentiation. Post-translationally, phosphorylation at Ser-226 by PKC promotes glucose uptake by increasing cell membrane localization. Detected in brain capillary (at protein level). Detected in brain capillary.

The protein localises to the cell membrane. Its subcellular location is the photoreceptor inner segment. It carries out the reaction D-glucose(out) = D-glucose(in). The uptake of glucose is inhibited by cytochalasin B. Glucose uptake is increased in response to phorbol ester 12-O-tetradecanoylphorbol-13-acetate (TPA) treatment: TPA-induced glucose uptake requires phosphorylation at Ser-226. Facilitative glucose transporter, which is responsible for constitutive or basal glucose uptake. Has a very broad substrate specificity; can transport a wide range of aldoses including both pentoses and hexoses. Most important energy carrier of the brain: present at the blood-brain barrier and assures the energy-independent, facilitative transport of glucose into the brain. In association with BSG and NXNL1, promotes retinal cone survival by increasing glucose uptake into photoreceptors. Required for mesendoderm differentiation. The polypeptide is Solute carrier family 2, facilitated glucose transporter member 1 (Bos taurus (Bovine)).